A 673-amino-acid chain; its full sequence is Gametogenetin (673 aa).

The disordered stretch occupies residues 1–599; that stretch reads MGNVQSEPSA…TSTAGASNKG (599 aa). The segment covering 14 to 30 has biased composition (basic and acidic residues); the sequence is SRKEQASDRASDSRRTP. Residues 70–83 show a composition bias toward low complexity; the sequence is ASSSPLPLTLELPS. The tract at residues 125 to 506 is interaction with GGNBP1; sequence RGLLEASHRG…APTPPSTLSP (382 aa). Over residues 161-178 the composition is skewed to pro residues; sequence PAPPPTPLEPRKQLPPAP. The span at 192-202 shows a compositional bias: polar residues; it reads LASSATSPTES. Residues 257 to 268 are compositionally biased toward low complexity; it reads SASGPLAAKASP. A Phosphoserine modification is found at Ser399. Residues 413 to 424 are compositionally biased toward low complexity; it reads PRRPTPALLAPP. Residues 438-475 show a composition bias toward pro residues; it reads RPVPPSPQQIPPLPPPPPTPPATPPPAPPPTPQPPALP. Low complexity predominate over residues 504–531; sequence LSPTAAADQVPAATPATVTSQVPATATA. Residues 511–673 are interactions with ZNF403/GGNBP2 and OAZ3; it reads DQVPAATPAT…HYDLQATHST (163 aa). Residues 542–551 are compositionally biased toward basic residues; it reads TRTRRNKGPR.

Isoform 1 and isoform 3 interact with FANCL. Isoform 1 interacts with GGNBP1, ZNF403/GGNBP2 and OAZ3. Isoform 2 interacts with GGNBP1. In terms of tissue distribution, testis-specific. Specifically expressed in the germ cells and not in the somatic, Sertoli, or Leydig cells. In adult testis, expression starts in stage VIII pachytene spermatocytes, increases in stage IX and X pachytene spermatocytes, and culminates in stage XI diplotene spermatocytes and the meiotic cells in stage XII. Expression decreases slightly in step 1-3 spermatids, further decreases in step 4-11 spermatids, and is no longer detectable in step 12 spermatids and beyond. Isoform 2 is mainly expressed in testis.

It localises to the cytoplasm. The protein resides in the perinuclear region. Its subcellular location is the cytoplasmic vesicle. The protein localises to the nucleus. It is found in the nucleolus. Its function is as follows. May be involved in spermatogenesis. The protein is Gametogenetin (Ggn) of Mus musculus (Mouse).